The sequence spans 370 residues: UDP-N-acetylglucosamine--N-acetylmuramyl-(pentapeptide) pyrophosphoryl-undecaprenol N-acetylglucosamine transferase (370 aa).

UDP-N-acetyl-alpha-D-glucosamine contacts are provided by residues 10–12 (TGG), N126, S200, I255, and Q300.

This sequence belongs to the glycosyltransferase 28 family. MurG subfamily.

The protein resides in the cell membrane. The enzyme catalyses Mur2Ac(oyl-L-Ala-gamma-D-Glu-L-Lys-D-Ala-D-Ala)-di-trans,octa-cis-undecaprenyl diphosphate + UDP-N-acetyl-alpha-D-glucosamine = beta-D-GlcNAc-(1-&gt;4)-Mur2Ac(oyl-L-Ala-gamma-D-Glu-L-Lys-D-Ala-D-Ala)-di-trans,octa-cis-undecaprenyl diphosphate + UDP + H(+). It participates in cell wall biogenesis; peptidoglycan biosynthesis. In terms of biological role, cell wall formation. Catalyzes the transfer of a GlcNAc subunit on undecaprenyl-pyrophosphoryl-MurNAc-pentapeptide (lipid intermediate I) to form undecaprenyl-pyrophosphoryl-MurNAc-(pentapeptide)GlcNAc (lipid intermediate II). This is UDP-N-acetylglucosamine--N-acetylmuramyl-(pentapeptide) pyrophosphoryl-undecaprenol N-acetylglucosamine transferase from Lactobacillus johnsonii (strain CNCM I-12250 / La1 / NCC 533).